Here is a 101-residue protein sequence, read N- to C-terminus: Large ribosomal subunit protein bL27 (101 aa).

A propeptide spanning residues 1–9 (MLLMNLQLF) is cleaved from the precursor.

Belongs to the bacterial ribosomal protein bL27 family. The N-terminus is cleaved by ribosomal processing cysteine protease Prp.

The polypeptide is Large ribosomal subunit protein bL27 (Clostridium tetani (strain Massachusetts / E88)).